The sequence spans 254 residues: MLPYWCPLLLAALVLQYATIDAVNYCNLPCRGDRFHVGCGESAFAQECGESPETLDLLKEHTDEILSKINDVRDHVAKGSWGLPMAARMKVVVWDEELARLATRHTKGCLAETHACRNTERFLFPGQLNFEYTDDKLPQTKELIDAAIKKGHLQKHNISREIIESYRDNGPDGNVEELALALSDRVTAVGCGLTTWQDGAKARALLTCNFSSQNTWGRPVYKIGNSPGEKCIEKDETYKNLCSASEPIDPNESN.

The N-terminal stretch at 1–22 is a signal peptide; that stretch reads MLPYWCPLLLAALVLQYATIDA. The Cell attachment site motif lies at 31–33; it reads RGD. The 145-residue stretch at 66 to 210 folds into the SCP domain; that stretch reads LSKINDVRDH…KARALLTCNF (145 aa).

Belongs to the CRISP family. As to expression, expressed in salivary glands.

It is found in the secreted. Inhibits platelet aggregation induced by all agonists tested (ADP, arachidonic acid, the thromboxane A2 analog U46619, thrombin, and snake venom snaclecs (TMVA that activates platelet through GPIB, and stejnulxin that specifically acts through GPVI (GP6))). May act by competing with fibrinogen for binding to glycoprotein IIb/IIIa (ITGA2B/ITGB3). The sequence is that of Tabinhibitin 6 from Tabanus yao (Horsefly).